A 395-amino-acid polypeptide reads, in one-letter code: F-box/kelch-repeat protein At3g13680 (395 aa).

The region spanning 1 to 47 is the F-box domain; the sequence is MTTMGDLPGDLVEEILSRVPLTSLRAIRSTCQKWNSLSKSQICGRKA. 4 Kelch repeats span residues 154-202, 210-256, 265-314, and 337-383; these read ILRI…SLKG, KKET…VSLA, VLYQ…FIDE, and IVYI…LVQL.

The protein is F-box/kelch-repeat protein At3g13680 of Arabidopsis thaliana (Mouse-ear cress).